The following is a 123-amino-acid chain: Fluoride-specific ion channel FluC (123 aa).

4 consecutive transmembrane segments (helical) span residues 1 to 21 (MQWL…GWLA), 32 to 52 (LGTL…LVWF), 66 to 86 (FVIT…VEVF), and 99 to 119 (GLIG…FYFF). Na(+) contacts are provided by glycine 73 and threonine 76.

Belongs to the fluoride channel Fluc/FEX (TC 1.A.43) family.

It localises to the cell inner membrane. It catalyses the reaction fluoride(in) = fluoride(out). Its activity is regulated as follows. Na(+) is not transported, but it plays an essential structural role and its presence is essential for fluoride channel function. In terms of biological role, fluoride-specific ion channel. Important for reducing fluoride concentration in the cell, thus reducing its toxicity. This chain is Fluoride-specific ion channel FluC, found in Psychrobacter cryohalolentis (strain ATCC BAA-1226 / DSM 17306 / VKM B-2378 / K5).